Reading from the N-terminus, the 208-residue chain is Uracil phosphoribosyltransferase (208 aa).

Residues R78, R103, and 130-138 each bind 5-phospho-alpha-D-ribose 1-diphosphate; that span reads DPMLATANS. Residues I193 and 198–200 each bind uracil; that span reads GDA. A 5-phospho-alpha-D-ribose 1-diphosphate-binding site is contributed by D199.

The protein belongs to the UPRTase family. Mg(2+) is required as a cofactor.

It carries out the reaction UMP + diphosphate = 5-phospho-alpha-D-ribose 1-diphosphate + uracil. The protein operates within pyrimidine metabolism; UMP biosynthesis via salvage pathway; UMP from uracil: step 1/1. With respect to regulation, allosterically activated by GTP. In terms of biological role, catalyzes the conversion of uracil and 5-phospho-alpha-D-ribose 1-diphosphate (PRPP) to UMP and diphosphate. This chain is Uracil phosphoribosyltransferase, found in Brucella abortus biovar 1 (strain 9-941).